The chain runs to 147 residues: Large ribosomal subunit protein bL9 (147 aa).

This sequence belongs to the bacterial ribosomal protein bL9 family.

Its function is as follows. Binds to the 23S rRNA. This Bacteroides fragilis (strain YCH46) protein is Large ribosomal subunit protein bL9.